Reading from the N-terminus, the 214-residue chain is Protein PsaE (214 aa).

The N-terminal stretch at 1-24 (MSHCVVLNKLESVLIIGDSRYALS) is a signal peptide. A DNA-binding region (ompR/PhoB-type) is located at residues 1 to 94 (MSHCVVLNKL…YKNEGYSYQK (94 aa)).

Its function is as follows. Required for expression of pH 6 antigen. The chain is Protein PsaE (psaE) from Yersinia pseudotuberculosis serotype I (strain IP32953).